The following is a 237-amino-acid chain: Uridylate kinase (237 aa).

Residue 12 to 15 (KLSG) coordinates ATP. Residues 20 to 25 (GEDGLG) are involved in allosteric activation by GTP. Gly-54 provides a ligand contact to UMP. The ATP site is built by Gly-55 and Arg-59. UMP-binding positions include Asp-74 and 135-142 (TGNPFFTT). 3 residues coordinate ATP: Thr-162, Tyr-168, and Asp-171.

Belongs to the UMP kinase family. In terms of assembly, homohexamer.

The protein localises to the cytoplasm. The catalysed reaction is UMP + ATP = UDP + ADP. It participates in pyrimidine metabolism; CTP biosynthesis via de novo pathway; UDP from UMP (UMPK route): step 1/1. Allosterically activated by GTP. Inhibited by UTP. Its function is as follows. Catalyzes the reversible phosphorylation of UMP to UDP. This is Uridylate kinase from Haemophilus influenzae (strain PittEE).